The sequence spans 137 residues: Phosphoribosyl-AMP cyclohydrolase (137 aa).

A Mg(2+)-binding site is contributed by Asp-84. Cys-85 contacts Zn(2+). Asp-86 and Asp-88 together coordinate Mg(2+). Zn(2+) contacts are provided by Cys-101 and Cys-108.

Belongs to the PRA-CH family. In terms of assembly, homodimer. It depends on Mg(2+) as a cofactor. Zn(2+) serves as cofactor.

It is found in the cytoplasm. It catalyses the reaction 1-(5-phospho-beta-D-ribosyl)-5'-AMP + H2O = 1-(5-phospho-beta-D-ribosyl)-5-[(5-phospho-beta-D-ribosylamino)methylideneamino]imidazole-4-carboxamide. It participates in amino-acid biosynthesis; L-histidine biosynthesis; L-histidine from 5-phospho-alpha-D-ribose 1-diphosphate: step 3/9. In terms of biological role, catalyzes the hydrolysis of the adenine ring of phosphoribosyl-AMP. This Prosthecochloris aestuarii (strain DSM 271 / SK 413) protein is Phosphoribosyl-AMP cyclohydrolase.